We begin with the raw amino-acid sequence, 142 residues long: Large ribosomal subunit protein bL17 (142 aa).

This sequence belongs to the bacterial ribosomal protein bL17 family. Part of the 50S ribosomal subunit. Contacts protein L32.

The polypeptide is Large ribosomal subunit protein bL17 (Brucella abortus (strain S19)).